Reading from the N-terminus, the 367-residue chain is uncharacterized protein (367 aa).

4 helical membrane passes run 18–38, 239–259, 296–316, and 329–349; these read ILAL…GILG, VSYF…IGIG, ILGV…GYLI, and AIFY…ISAL.

It belongs to the ABC-4 integral membrane protein family.

The protein resides in the cell membrane. This is an uncharacterized protein from Methanocaldococcus jannaschii (strain ATCC 43067 / DSM 2661 / JAL-1 / JCM 10045 / NBRC 100440) (Methanococcus jannaschii).